A 215-amino-acid chain; its full sequence is Putative BTB/POZ domain-containing protein At2g05330 (215 aa).

Residues 17–87 enclose the BTB domain; sequence SWQKIGKLTY…LYSDGSMLSS (71 aa).

The protein operates within protein modification; protein ubiquitination. In terms of biological role, may act as a substrate-specific adapter of an E3 ubiquitin-protein ligase complex (CUL3-RBX1-BTB) which mediates the ubiquitination and subsequent proteasomal degradation of target proteins. The polypeptide is Putative BTB/POZ domain-containing protein At2g05330 (Arabidopsis thaliana (Mouse-ear cress)).